The sequence spans 461 residues: D-phenylhydantoinase (461 aa).

A divalent metal cation is bound by residues histidine 59, histidine 61, and lysine 151. Lysine 151 bears the N6-carboxylysine mark. A substrate-binding site is contributed by tyrosine 156. Positions 182 and 239 each coordinate a divalent metal cation. Serine 286 contributes to the substrate binding site. An a divalent metal cation-binding site is contributed by aspartate 313. Residue asparagine 335 coordinates substrate.

Belongs to the metallo-dependent hydrolases superfamily. Hydantoinase/dihydropyrimidinase family. In terms of assembly, homotetramer. The cofactor is a divalent metal cation. In terms of processing, carboxylation allows a single lysine to coordinate two divalent metal cations.

The enzyme catalyses D-5-phenylhydantoin + H2O = N-carbamoyl-D-phenylglycine + H(+). In terms of biological role, catalyzes the stereospecific hydrolysis of the cyclic amide bond of D-hydantoin derivatives with an aromatic side chains at the 5'-position. Has no activity on dihydropyrimidines. The physiological function is unknown. This Escherichia coli (strain UTI89 / UPEC) protein is D-phenylhydantoinase.